A 773-amino-acid chain; its full sequence is Pentatricopeptide repeat-containing protein At1g76280 (773 aa).

PPR repeat units follow at residues 130 to 165 (DSRS…RISP), 166 to 200 (LLPI…RVGK), 201 to 231 (NGIT…YVNH), 235 to 269 (DILS…ALRG), 332 to 369 (LRWS…NLKP), 370 to 400 (YDST…ISEC), 402 to 436 (YSYP…KLRP), 524 to 558 (GTPT…GCPA), 559 to 593 (DVAT…GFSP), 594 to 628 (KAVT…EIHL), and 629 to 663 (DVLS…KVNP).

Belongs to the PPR family. P subfamily.

The chain is Pentatricopeptide repeat-containing protein At1g76280 from Arabidopsis thaliana (Mouse-ear cress).